The primary structure comprises 89 residues: Cell division topological specificity factor (89 aa).

This sequence belongs to the MinE family.

Its function is as follows. Prevents the cell division inhibition by proteins MinC and MinD at internal division sites while permitting inhibition at polar sites. This ensures cell division at the proper site by restricting the formation of a division septum at the midpoint of the long axis of the cell. This is Cell division topological specificity factor from Pectobacterium atrosepticum (strain SCRI 1043 / ATCC BAA-672) (Erwinia carotovora subsp. atroseptica).